The primary structure comprises 387 residues: Decapping nuclease RAI1 (387 aa).

Glu-172 serves as a coordination point for a divalent metal cation. Ser-198 is subject to Phosphoserine. Substrate is bound at residue Glu-221. Residues Asp-223, Glu-241, and Leu-242 each coordinate a divalent metal cation. The substrate site is built by Lys-243 and Gln-267. Residues 273 to 387 (IPRIIYGFKD…GFKEWRKSLK (115 aa)) are interaction with RAT1.

The protein belongs to the DXO/Dom3Z family. As to quaternary structure, interacts with RAT1, RTT103 and pre-60S ribosomal subunits. Interacts with RAT1; the interaction is direct, stabilizes RAT1 protein structure and stimulates its exoribonuclease activity. The interaction also stimulates RAI1 pyrophosphohydrolase activity, probably by recruiting it to mRNA substrates. A divalent metal cation serves as cofactor.

It localises to the nucleus. It carries out the reaction a 5'-end NAD(+)-phospho-ribonucleoside in mRNA + H2O = a 5'-end phospho-ribonucleoside in mRNA + NAD(+) + H(+). It catalyses the reaction a 5'-end (N(7)-methyl 5'-triphosphoguanosine)-ribonucleoside-ribonucleotide in mRNA + H2O = a (N(7)-methyl 5'-triphosphoguanosine)-nucleoside + a 5'-end phospho-ribonucleoside in mRNA + H(+). The catalysed reaction is a 5'-end triphospho-ribonucleoside in mRNA + H2O = a 5'-end phospho-ribonucleoside in mRNA + diphosphate + H(+). Decapping enzyme for NAD-capped RNAs: specifically hydrolyzes the nicotinamide adenine dinucleotide (NAD) cap from a subset of RNAs by removing the entire NAD moiety from the 5'-end of an NAD-capped RNA. The NAD-cap is present at the 5'-end of some RNAs and snoRNAs. In contrast to the canonical 5'-end N7 methylguanosine (m7G) cap, the NAD cap promotes mRNA decay. Also acts as a non-canonical decapping enzyme that removes the entire cap structure of m7G capped or incompletely capped RNAs. Has decapping activity toward incomplete 5'-end m7G cap mRNAs such as unmethylated 5'-end-capped RNA (cap0), while it has no activity toward 2'-O-ribose methylated m7G cap (cap1). Also possesses RNA 5'-pyrophosphohydrolase activity by hydrolyzing the 5'-end triphosphate to release pyrophosphates. Stimulates exoribonuclease activity of RAT1, allowing it to degrade RNAs with stable secondary structure more effectively. Required for the processing of nuclear mRNA and rRNA precursors. May promote termination of transcription by RNA polymerase II. In Saccharomyces cerevisiae (strain ATCC 204508 / S288c) (Baker's yeast), this protein is Decapping nuclease RAI1.